A 275-amino-acid polypeptide reads, in one-letter code: Phosphatidylglycerol--prolipoprotein diacylglyceryl transferase (275 aa).

Helical transmembrane passes span 20 to 40 (FTIHWYGVIIASGVVLALLLA), 58 to 78 (LLWALPIAIICARIYYVVFQW), 88 to 108 (IIAIWDGGIAIYGAILGGFIV), and 118 to 138 (LSSWLMMDIIAPTLIMAQGIG). Arg139 contributes to the a 1,2-diacyl-sn-glycero-3-phospho-(1'-sn-glycerol) binding site. 2 helical membrane passes run 209-229 (GEIFLTYVMWYAFGRFFIEGM) and 239-259 (IRISQLLSIVFFVSALIILII).

Belongs to the Lgt family.

It is found in the cell membrane. The catalysed reaction is L-cysteinyl-[prolipoprotein] + a 1,2-diacyl-sn-glycero-3-phospho-(1'-sn-glycerol) = an S-1,2-diacyl-sn-glyceryl-L-cysteinyl-[prolipoprotein] + sn-glycerol 1-phosphate + H(+). It participates in protein modification; lipoprotein biosynthesis (diacylglyceryl transfer). In terms of biological role, catalyzes the transfer of the diacylglyceryl group from phosphatidylglycerol to the sulfhydryl group of the N-terminal cysteine of a prolipoprotein, the first step in the formation of mature lipoproteins. The protein is Phosphatidylglycerol--prolipoprotein diacylglyceryl transferase of Limosilactobacillus reuteri (strain DSM 20016) (Lactobacillus reuteri).